We begin with the raw amino-acid sequence, 122 residues long: Large ribosomal subunit protein uL14 (122 aa).

It belongs to the universal ribosomal protein uL14 family. In terms of assembly, part of the 50S ribosomal subunit. Forms a cluster with proteins L3 and L19. In the 70S ribosome, L14 and L19 interact and together make contacts with the 16S rRNA in bridges B5 and B8.

Its function is as follows. Binds to 23S rRNA. Forms part of two intersubunit bridges in the 70S ribosome. This chain is Large ribosomal subunit protein uL14, found in Amoebophilus asiaticus (strain 5a2).